The primary structure comprises 223 residues: uncharacterized protein (223 aa).

The segment at 1-30 (MASATVRNVPLLDDDTIPFGEEDEMRDPSR) is disordered. The segment covering 12-25 (LDDDTIPFGEEDEM) has biased composition (acidic residues). The next 4 membrane-spanning stretches (helical) occupy residues 35–55 (YTHP…ILIY), 56–76 (MFCG…VLFL), 129–149 (IFWL…LFAL), and 154–174 (FKWL…LYGY).

Belongs to the TVP23 family.

The protein localises to the membrane. This is an uncharacterized protein from Drosophila melanogaster (Fruit fly).